A 380-amino-acid chain; its full sequence is SAM and SH3 domain-containing protein 3 (380 aa).

Disordered regions lie at residues 1-76 (MLRR…GKKW) and 96-168 (LSEE…SPAP). The segment covering 22 to 41 (LQRSSSFKDFAKSKPSSPVV) has biased composition (low complexity). Phosphoserine is present on residues Ser27, Ser34, and Ser42. Thr61 carries the post-translational modification Phosphothreonine. Ser97 carries the post-translational modification Phosphoserine. A Phosphothreonine modification is found at Thr103. Residue Ser110 is modified to Phosphoserine. Position 112 is a phosphothreonine (Thr112). Ser113 and Ser120 each carry phosphoserine. Positions 141 to 150 (LSRQTSTGSE) are enriched in polar residues. Residues 173 to 234 (PFCGRARVHT…KFIYVDVLPE (62 aa)) enclose the SH3 domain. The 65-residue stretch at 252–316 (PKPKTLHELL…LTAAELLLDY (65 aa)) folds into the SAM domain. The residue at position 318 (Thr318) is a Phosphothreonine. Residues 318–327 (TGSEEAEEGA) are compositionally biased toward acidic residues. Residues 318-380 (TGSEEAEEGA…LQGLSLSGAP (63 aa)) form a disordered region. At Ser320 the chain carries Phosphoserine. Polar residues predominate over residues 369-380 (EQLQGLSLSGAP).

In terms of tissue distribution, preferentially expressed in lymphoid tissues. Expressed in bone marrow, thymus, spleen, lymph nodes and Peyer patches of gut. In the spleen and lymph nodes, expressed in both T- and B-cells. In the thymus, in the medulla and cortex.

Functionally, may function as a signaling adapter protein in lymphocytes. The sequence is that of SAM and SH3 domain-containing protein 3 (Sash3) from Mus musculus (Mouse).